The sequence spans 154 residues: Troponin C, isoallergen Bla g 6.0301 (154 aa).

EF-hand domains lie at 11-46, 47-82, 87-122, and 123-154; these read EQISVLRKAFDAFDREKSGSISTNMVEEILRLMGQP, FNRRTLEELIDEVDADKSGRLEFDEFVTLAAKFIIE, AMEKELREAFRLYDKEGNGYIPTSCLREILRELDEQ, and LTSDELDMMIEEIDADGSGTVDFDEFMEMMTG. The Ca(2+) site is built by D60, D62, S64, R66, and E71. Ca(2+) contacts are provided by D136, D138, S140, T142, and E147.

The protein belongs to the troponin C family.

In terms of biological role, troponin is the central regulatory protein of striated muscle contraction. It consists of three components: Troponin-I (Tn-I) which is the inhibitor of actomyosin ATPase, Troponin-T (Tn-T) which contains the binding site for tropomyosin and Troponin-C (Tn-C). The binding of calcium to Tn-C abolishes the inhibitory action of Tn on actin filaments. This chain is Troponin C, isoallergen Bla g 6.0301, found in Blattella germanica (German cockroach).